Here is a 242-residue protein sequence, read N- to C-terminus: Phosphate import ATP-binding protein PstB 1 (242 aa).

Residues 1 to 237 form the ABC transporter domain; it reads MDLYYGSYRA…PKDQRTEDYI (237 aa). Residue 28–35 coordinates ATP; the sequence is GPSGCGKS.

It belongs to the ABC transporter superfamily. Phosphate importer (TC 3.A.1.7) family. The complex is composed of two ATP-binding proteins (PstB), two transmembrane proteins (PstC and PstA) and a solute-binding protein (PstS).

It is found in the cell membrane. It catalyses the reaction phosphate(out) + ATP + H2O = ADP + 2 phosphate(in) + H(+). In terms of biological role, part of the ABC transporter complex PstSACB involved in phosphate import. Responsible for energy coupling to the transport system. The chain is Phosphate import ATP-binding protein PstB 1 from Symbiobacterium thermophilum (strain DSM 24528 / JCM 14929 / IAM 14863 / T).